A 387-amino-acid chain; its full sequence is Phosphoglycerate kinase (387 aa).

Residues 21–23 (DLN), Arg36, 59–62 (HLGR), Arg113, and Arg146 each bind substrate. Residues Lys197, Glu314, and 340-343 (GGDT) contribute to the ATP site.

The protein belongs to the phosphoglycerate kinase family. As to quaternary structure, monomer.

It is found in the cytoplasm. It catalyses the reaction (2R)-3-phosphoglycerate + ATP = (2R)-3-phospho-glyceroyl phosphate + ADP. It participates in carbohydrate degradation; glycolysis; pyruvate from D-glyceraldehyde 3-phosphate: step 2/5. The chain is Phosphoglycerate kinase from Cronobacter sakazakii (strain ATCC BAA-894) (Enterobacter sakazakii).